A 552-amino-acid polypeptide reads, in one-letter code: E3 ubiquitin-protein ligase MGRN1 (552 aa).

Gly-2 carries the N-myristoyl glycine lipid modification. The RING-type zinc-finger motif lies at 278 to 317; the sequence is CVVCLSDLRDTLILPCRHLCLCTSCADTLRYQANNCPICR. The disordered stretch occupies residues 355–384; sequence SCPFKKSKPHPASLASKKPKRETNSDSVPP. A Required for TSG101-binding motif is present at residues 406-409; the sequence is PSAP. Tyr-411 is modified (phosphotyrosine). The segment at 439–552 is disordered; the sequence is SSRQKGRPQS…PDSCSVGIDE (114 aa). Over residues 450–460 the composition is skewed to polar residues; that stretch reads APDSTLRSPSS. Residues 464 to 475 are compositionally biased toward acidic residues; sequence EEDEEKLSEDVD. A Phosphoserine modification is found at Ser-471. The span at 504-523 shows a compositional bias: polar residues; it reads SSSPQQGTRAASIENVLQDS. Ser-524 is modified (phosphoserine).

In terms of assembly, interacts with MC1R and MC4R, but not with TBXA2R. Interacts with TSG101. Interacts with mislocalized cytosolically exposed PRNP; this interaction alters MGRN1 subcellular location and causes lysosomal enlargement. Autoubiquitinated in vitro.

The protein resides in the early endosome. It is found in the cytoplasm. Its subcellular location is the cytosol. It localises to the nucleus. The protein localises to the cell membrane. The catalysed reaction is S-ubiquitinyl-[E2 ubiquitin-conjugating enzyme]-L-cysteine + [acceptor protein]-L-lysine = [E2 ubiquitin-conjugating enzyme]-L-cysteine + N(6)-ubiquitinyl-[acceptor protein]-L-lysine.. Its pathway is protein modification; protein ubiquitination. Functionally, E3 ubiquitin-protein ligase. Mediates monoubiquitination at multiple sites of TSG101 in the presence of UBE2D1, but not of UBE2G1, nor UBE2H. Plays a role in the regulation of endosome-to-lysosome trafficking. Impairs MC1R- and MC4R-signaling by competing with GNAS-binding to MCRs and inhibiting agonist-induced cAMP production. Does not inhibit ADRB2-signaling. Does not promote MC1R ubiquitination. Acts also as a negative regulator of hedgehog signaling. The sequence is that of E3 ubiquitin-protein ligase MGRN1 (MGRN1) from Homo sapiens (Human).